The primary structure comprises 366 residues: uncharacterized protein (366 aa).

Glu-139 serves as the catalytic Proton donor. Glu-249 acts as the Nucleophile in catalysis.

The protein belongs to the glycosyl hydrolase 53 family.

This is an uncharacterized protein from Niallia circulans (Bacillus circulans).